Here is a 1023-residue protein sequence, read N- to C-terminus: Protein FAM13A (1023 aa).

In terms of domain architecture, Rho-GAP spans Val-43 to Phe-231. The tract at residues Leu-269–Ser-290 is disordered. Ser-345 carries the phosphoserine modification. 2 disordered regions span residues Val-381–Asn-437 and Cys-459–Gln-562. Residues Ser-384–Ala-405 show a composition bias toward low complexity. 2 stretches are compositionally biased toward basic and acidic residues: residues Ser-412–Ile-427 and Ser-509–His-524. Polar residues predominate over residues Pro-536–Ala-549. Residues Ser-597 and Ser-617 each carry the phosphoserine modification. 2 disordered regions span residues Gln-628 to Leu-663 and Ile-726 to Glu-759. The stretch at Ala-666–Asp-730 forms a coiled coil. Ser-727 is subject to Phosphoserine. Position 732 is a phosphothreonine (Thr-732). Residues Arg-738–Ser-748 show a composition bias toward polar residues. A compositionally biased stretch (basic and acidic residues) spans Leu-750–Glu-759. A coiled-coil region spans residues Ala-946 to Arg-978.

The protein belongs to the FAM13 family. Isoform 1 is widely expressed, with highest expression in skeletal muscle, thymus, brain and lung. Isoform 3 is less abundant than isoform 1 and predominantly expressed in kidney, pancreas, liver, lung and thymus.

The protein is Protein FAM13A (FAM13A) of Homo sapiens (Human).